The primary structure comprises 2629 residues: Telomerase protein component 1 (2629 aa).

TEP1 N-terminal repeat units follow at residues 1–30 (MEKL…DLQP), 31–60 (LEKI…DLQP), 61–90 (TERI…DLQP), and 91–120 (LEKL…TVKS). The 459-residue stretch at 227–685 (LKLTSGDSGF…VKHNLSPMPG (459 aa)) folds into the TROVE domain. Basic residues predominate over residues 386–397 (PRKHRSKRRSRQ). The interval 386–412 (PRKHRSKRRSRQPPRPQKTERPFSERG) is disordered. Positions 402-412 (QKTERPFSERG) are enriched in basic and acidic residues. An NACHT domain is found at 1171–1578 (RLSLVTGQAG…EFLTNLHVVA (408 aa)). Residue 1177–1184 (GQAGQGKT) coordinates ATP. WD repeat units lie at residues 1420-1462 (VLPQ…EVLA), 1681-1720 (TMSS…EEKA), 1723-1761 (SGCD…WVFQ), 1764-1803 (AHQY…LAFQ), 1805-1844 (THPK…VTKE), 1847-1886 (APGP…RLAA), 1889-1930 (AQCG…GCLG), 1932-1971 (LPLS…QGPQ), 1974-2013 (ELNV…HSLW), 2015-2054 (LSRY…QPHV), 2067-2106 (GHEG…APLL), 2113-2151 (CHRD…QLGQ), 2154-2191 (GHQS…LTSI), 2193-2241 (AHSG…QIRT), 2244-2282 (GHSG…DDSY), 2285-2324 (RSSV…ATAQ), 2326-2362 (PGRV…GSTS), 2375-2424 (EDWG…SSIL), 2467-2507 (PNGS…GEWI), 2555-2592 (IHLG…LLGL), and 2594-2628 (RCEG…FLSW).

As to quaternary structure, associated component of the telomerase holoenzyme complex. Component of the vault ribonucleoprotein particle, at least composed of MVP, PARP4 and one or more vault RNAs (vRNAs). Binds to VAULTRC1, VAULTRC2 and VAULTRC4/hvg4 vRNAs. As to expression, ubiquitous.

It is found in the nucleus. Its subcellular location is the chromosome. The protein resides in the telomere. In terms of biological role, component of the telomerase ribonucleoprotein complex that is essential for the replication of chromosome termini. Also a component of the ribonucleoprotein vaults particle, a multi-subunit structure involved in nucleo-cytoplasmic transport. Responsible for the localizing and stabilizing vault RNA (vRNA) association in the vault ribonucleoprotein particle. This chain is Telomerase protein component 1 (Tep1), found in Mus musculus (Mouse).